A 339-amino-acid chain; its full sequence is Diacylglycerol acyltransferase/mycolyltransferase Ag85A (339 aa).

The N-terminal stretch at 1–43 (MKLVDRFRGAVTGMPRRLMVGAVGAALLSGLVGFVGGSATASA) is a signal peptide. Residue 85 to 86 (MR) coordinates substrate. The fibronectin-binding stretch occupies residues 101–111 (FEWYNQSGISV). Cys130 and Cys135 are oxidised to a cystine. The substrate site is built by Ser169 and Asp197. Ser169 (nucleophile) is an active-site residue. The active site involves Glu272. Substrate-binding positions include 274–277 (FVRT), Lys281, and 304–306 (HDW). The active site involves His304.

Belongs to the mycobacterial A85 antigen family. Homodimer.

It localises to the secreted. The protein resides in the cell wall. The protein localises to the cytoplasm. It catalyses the reaction an acyl-CoA + a 1,2-diacyl-sn-glycerol = a triacyl-sn-glycerol + CoA. It carries out the reaction 2 alpha,alpha'-trehalose 6-mycolate = alpha,alpha'-trehalose 6,6'-bismycolate + alpha,alpha-trehalose. Functionally, the antigen 85 proteins (FbpA, FbpB, FbpC) are responsible for the high affinity of mycobacteria for fibronectin, a large adhesive glycoprotein, which facilitates the attachment of M.tuberculosis to murine alveolar macrophages (AMs). They also help to maintain the integrity of the cell wall by catalyzing the transfer of mycolic acids to cell wall arabinogalactan, and through the synthesis of alpha,alpha-trehalose dimycolate (TDM, cord factor). They catalyze the transfer of a mycoloyl residue from one molecule of alpha,alpha-trehalose monomycolate (TMM) to another TMM, leading to the formation of TDM. FbpA mediates triacylglycerol (TAG) formation with long-chain acyl-CoA as the acyl donor and 1,2-dipalmitoyl-sn-glycerol (1,2-dipalmitin) as the acyl acceptor. It has a preference for C26:0-CoA over C18:1-CoA. The sequence is that of Diacylglycerol acyltransferase/mycolyltransferase Ag85A (fbpA) from Mycobacterium gordonae.